The chain runs to 403 residues: SEC14-like protein 2 (403 aa).

N6-succinyllysine occurs at positions 11 and 51. Residues 76-249 (PPEVVQQYLS…EYGGTMTDPD (174 aa)) form the CRAL-TRIO domain. 2 positions are modified to N6-succinyllysine: Lys-253 and Lys-257. The GOLD domain occupies 275-383 (KQQYEHSVQI…AKKVSFTVEV (109 aa)). Lys-393 carries the post-translational modification N6-succinyllysine.

In terms of assembly, monomer. Post-translationally, the N-terminus is blocked.

It is found in the cytoplasm. Its subcellular location is the nucleus. Carrier protein. Binds to some hydrophobic molecules and promotes their transfer between the different cellular sites. Binds with high affinity to alpha-tocopherol. Also binds with a weaker affinity to other tocopherols and to tocotrienols. May have a transcriptional activatory activity via its association with alpha-tocopherol. Probably recognizes and binds some squalene structure, suggesting that it may regulate cholesterol biosynthesis by increasing the transfer of squalene to a metabolic active pool in the cell. The chain is SEC14-like protein 2 (SEC14L2) from Bos taurus (Bovine).